A 146-amino-acid polypeptide reads, in one-letter code: Aminoglycoside N(6')-acetyltransferase type 1 (146 aa).

In terms of domain architecture, N-acetyltransferase spans 1–146; it reads MIVICDHDNL…RVVFYRKTLG (146 aa). Substrate is bound by residues Trp-21, Tyr-66, Glu-79, and Asp-115. Residue Asn-120 participates in acetyl-CoA binding. Position 136 (Glu-136) interacts with substrate.

Homodimer.

The enzyme catalyses kanamycin B + acetyl-CoA = N(6')-acetylkanamycin B + CoA + H(+). Its function is as follows. Catalyzes the transfer of an acetyl group from acetyl-CoA to the 6'-amino group of aminoglycoside molecules conferring resistance to antibiotics containing the purpurosamine ring including amikacin, tobramycin, netilmicin, isepamicin and sisomicin. The polypeptide is Aminoglycoside N(6')-acetyltransferase type 1 (Serratia marcescens).